Reading from the N-terminus, the 161-residue chain is Vitamin K epoxide reductase complex subunit 1 (161 aa).

Over 1 to 9 the chain is Cytoplasmic; sequence MGTTWRSPG. The chain crosses the membrane as a helical span at residues 10–29; that stretch reads LVRLALCLAGLALSLYALHV. The Lumenal portion of the chain corresponds to 30–80; it reads KAARARDENYRALCDVGTAISCSRVFSSRWGRGFGLVEHMLGADSVLNQSN. Cys43 and Cys51 are oxidised to a cystine. Asn80 contributes to the (S)-warfarin binding site. The chain crosses the membrane as a helical span at residues 81–95; the sequence is SIFGCLFYTLQLLLG. Over 96 to 100 the chain is Cytoplasmic; sequence CLRGR. A helical transmembrane segment spans residues 101–128; sequence WASILLVLSSLVSVAGSVYLAWILFFVL. Over 129–131 the chain is Lumenal; sequence YDF. Cysteines 132 and 135 form a disulfide. A helical transmembrane segment spans residues 132 to 153; sequence CIVCITTYAINVGLMLLSFQKV. Positions 135 and 139 each coordinate phylloquinone. Tyr139 contributes to the (S)-warfarin binding site. Over 154 to 161 the chain is Cytoplasmic; it reads PEHKTKKH.

Belongs to the VKOR family. As to expression, detected in liver.

The protein localises to the endoplasmic reticulum membrane. The enzyme catalyses phylloquinone + [protein]-disulfide + H2O = 2,3-epoxyphylloquinone + [protein]-dithiol. It catalyses the reaction phylloquinol + [protein]-disulfide = phylloquinone + [protein]-dithiol. Its activity is regulated as follows. Inhibited by warfarin (coumadin). Warfarin locks VKORC1 in both redox states into the closed conformation. Involved in vitamin K metabolism. Catalytic subunit of the vitamin K epoxide reductase (VKOR) complex which reduces inactive vitamin K 2,3-epoxide to active vitamin K. Vitamin K is required for the gamma-carboxylation of various proteins, including clotting factors, and is required for normal blood coagulation, but also for normal bone development. The polypeptide is Vitamin K epoxide reductase complex subunit 1 (Vkorc1) (Mus musculus (Mouse)).